Here is a 223-residue protein sequence, read N- to C-terminus: Transcriptional regulatory protein HprR (223 aa).

One can recognise a Response regulatory domain in the interval lysine 2 to leucine 115. Residue aspartate 51 is modified to 4-aspartylphosphate. The ompR/PhoB-type DNA-binding region spans asparagine 122–alanine 220.

In terms of processing, phosphorylated by HprS.

The protein resides in the cytoplasm. In terms of biological role, member of a two-component regulatory system HprR/HprS involved in response to hydrogen peroxide. Regulates the expression of at least 5 operons, cyoABCDE, hprRS, hiuH, cusRS and cusCFBA. Bifunctional regulator that acts as an activator and a repressor. In Escherichia coli (strain K12), this protein is Transcriptional regulatory protein HprR.